The chain runs to 336 residues: Adenylate isopentenyltransferase 3, chloroplastic (336 aa).

Residues 1–55 (MIMKISMAMCKQPLPPSPTLDFPPARFGPNMLTLNPYGPKDKVVVIMGATGTGKS) constitute a chloroplast transit peptide. 48–55 (GATGTGKS) is a binding site for ATP. Position 333 is a cysteine methyl ester (C333). C333 is lipidated: S-farnesyl cysteine. Positions 334-336 (LVA) are cleaved as a propeptide — removed in mature form.

Belongs to the IPP transferase family. Farnesylated. In terms of tissue distribution, expressed the phloem companion cells.

It localises to the plastid. The protein resides in the chloroplast. Its subcellular location is the nucleus membrane. The protein localises to the cytoplasm. It catalyses the reaction dimethylallyl diphosphate + ADP = N(6)-(dimethylallyl)adenosine 5'-diphosphate + diphosphate. It carries out the reaction dimethylallyl diphosphate + ATP = N(6)-(dimethylallyl)adenosine 5'-triphosphate + diphosphate. In terms of biological role, involved in cytokinin biosynthesis. Catalyzes the transfer of an isopentenyl group from dimethylallyl diphosphate (DMAPP) to ATP and ADP. The chain is Adenylate isopentenyltransferase 3, chloroplastic (IPT3) from Arabidopsis thaliana (Mouse-ear cress).